A 233-amino-acid chain; its full sequence is Antilisterial bacteriocin subtilosin biosynthesis protein AlbG (233 aa).

A run of 5 helical transmembrane segments spans residues 4 to 24, 46 to 66, 116 to 136, 145 to 165, and 192 to 212; these read STVF…FGWV, GLLA…LHYV, TYVM…FEIV, TPPI…LFYM, and IGWM…LAAI.

It localises to the cell membrane. Its function is as follows. Involved in the production of the bacteriocin subtilosin. The protein is Antilisterial bacteriocin subtilosin biosynthesis protein AlbG (albG) of Bacillus subtilis.